The primary structure comprises 1072 residues: DNA-directed RNA polymerase subunit beta (1072 aa).

The protein belongs to the RNA polymerase beta chain family. In terms of assembly, in plastids the minimal PEP RNA polymerase catalytic core is composed of four subunits: alpha, beta, beta', and beta''. When a (nuclear-encoded) sigma factor is associated with the core the holoenzyme is formed, which can initiate transcription.

It localises to the plastid. It is found in the chloroplast. The enzyme catalyses RNA(n) + a ribonucleoside 5'-triphosphate = RNA(n+1) + diphosphate. DNA-dependent RNA polymerase catalyzes the transcription of DNA into RNA using the four ribonucleoside triphosphates as substrates. The polypeptide is DNA-directed RNA polymerase subunit beta (Eucalyptus globulus subsp. globulus (Tasmanian blue gum)).